The chain runs to 679 residues: Glutamine-dependent NAD(+) synthetase (679 aa).

Positions 12–276 (VRVAACTHHT…VRRSVADVDT (265 aa)) constitute a CN hydrolase domain. The active-site Proton acceptor; for glutaminase activity is the glutamate 52. Lysine 121 functions as the For glutaminase activity in the catalytic mechanism. An L-glutamine-binding site is contributed by tyrosine 127. The active-site Nucleophile; for glutaminase activity is cysteine 176. Residues serine 203 and arginine 209 each coordinate L-glutamine. The ligase stretch occupies residues 337–679 (QQDCYEAYNI…DQIDREVPKG (343 aa)). Residue 366–373 (GVSGGLDS) coordinates ATP. Asparagine 456 provides a ligand contact to deamido-NAD(+). Threonine 480 is a binding site for ATP. Residues glutamate 485, 490–493 (WSTY), and lysine 635 each bind deamido-NAD(+). The interval 639 to 658 (LPNGPKVSHGGALSPRGDWR) is disordered.

This sequence in the C-terminal section; belongs to the NAD synthetase family.

The enzyme catalyses deamido-NAD(+) + L-glutamine + ATP + H2O = L-glutamate + AMP + diphosphate + NAD(+) + H(+). Its pathway is cofactor biosynthesis; NAD(+) biosynthesis; NAD(+) from deamido-NAD(+) (L-Gln route): step 1/1. Catalyzes the ATP-dependent amidation of deamido-NAD to form NAD. Uses L-glutamine as a nitrogen source. This Mycobacterium bovis (strain ATCC BAA-935 / AF2122/97) protein is Glutamine-dependent NAD(+) synthetase.